Here is a 117-residue protein sequence, read N- to C-terminus: UPF0127 protein PYRAB11210 (117 aa).

The protein belongs to the UPF0127 family.

The polypeptide is UPF0127 protein PYRAB11210 (Pyrococcus abyssi (strain GE5 / Orsay)).